The chain runs to 1423 residues: Histone-lysine N-methyltransferase ATXR7 (1423 aa).

Residues 263 to 312 form the GYF domain; it reads HACWFLVDGEGRNHGPHSILELFSWQQHGYVSDAALIRDGENKLRPITLA. Disordered stretches follow at residues 923-960, 1057-1097, and 1115-1158; these read CKDH…EGTK, CSIS…SSTD, and LPCH…GRPK. A compositionally biased stretch (basic residues) spans 936 to 949; the sequence is QKVKKAHTSKLKRK. Positions 950–959 are enriched in basic and acidic residues; the sequence is NLSDARDEGT. Positions 1057 to 1071 are enriched in polar residues; sequence CSISQKGRKSSQSSI. Composition is skewed to basic and acidic residues over residues 1115 to 1124 and 1140 to 1157; these read LPCHTSDKLQ and HTTE…DGRP. Residues 1266 to 1383 form the SET domain; sequence KHLRFQQSKI…AGEEISYNYK (118 aa). Tyr-1382 lines the S-adenosyl-L-methionine pocket.

The protein belongs to the class V-like SAM-binding methyltransferase superfamily. Histone-lysine methyltransferase family. TRX/MLL subfamily. As to expression, expressed in the shoot and root apices, vascular tissues and mesophyll cells of rosette leaves.

The protein localises to the nucleus. The catalysed reaction is L-lysyl(4)-[histone H3] + 3 S-adenosyl-L-methionine = N(6),N(6),N(6)-trimethyl-L-lysyl(4)-[histone H3] + 3 S-adenosyl-L-homocysteine + 3 H(+). It catalyses the reaction L-lysyl(36)-[histone H3] + 2 S-adenosyl-L-methionine = N(6),N(6)-dimethyl-L-lysyl(36)-[histone H3] + 2 S-adenosyl-L-homocysteine + 2 H(+). Its function is as follows. Histone methyltransferase involved in regulation of flowering time. Required for the expression of the flowering repressors FLC and MADS-box genes of the MAF family. Required for histone H3 dimethylation on 'Lys-36' H3K36me2 at the FLC locus. Required for histone H3 trimethylation on 'Lys-4' (H3K4me3) at the FLC locus. Prevents trimethylation on 'Lys-27' (H3K27me3) at the same locus. Involved in the control of seed dormancy and germination. This chain is Histone-lysine N-methyltransferase ATXR7, found in Arabidopsis thaliana (Mouse-ear cress).